Here is a 181-residue protein sequence, read N- to C-terminus: Oligoribonuclease (181 aa).

Residues 8 to 171 (LIWIDLEMTG…DDIRESIAEL (164 aa)) enclose the Exonuclease domain. Tyr129 is a catalytic residue.

It belongs to the oligoribonuclease family.

Its subcellular location is the cytoplasm. 3'-to-5' exoribonuclease specific for small oligoribonucleotides. In Vibrio vulnificus (strain CMCP6), this protein is Oligoribonuclease.